The primary structure comprises 122 residues: Small ribosomal subunit protein uS13 (122 aa).

The tract at residues 99–122 (RGQRTHTNARTRKGPAKAIAGKKK) is disordered.

It belongs to the universal ribosomal protein uS13 family. In terms of assembly, part of the 30S ribosomal subunit. Forms a loose heterodimer with protein S19. Forms two bridges to the 50S subunit in the 70S ribosome.

Functionally, located at the top of the head of the 30S subunit, it contacts several helices of the 16S rRNA. In the 70S ribosome it contacts the 23S rRNA (bridge B1a) and protein L5 of the 50S subunit (bridge B1b), connecting the 2 subunits; these bridges are implicated in subunit movement. Contacts the tRNAs in the A and P-sites. This is Small ribosomal subunit protein uS13 from Cereibacter sphaeroides (strain ATCC 17029 / ATH 2.4.9) (Rhodobacter sphaeroides).